The chain runs to 538 residues: Furcatin hydrolase (538 aa).

Residues 1–66 (MATITTLASS…NFNKDNWLAS (66 aa)) constitute a chloroplast transit peptide. A disordered region spans residues 18 to 37 (SFPGGSSRKPKKDNLSIKPP). Residues Q88, H192, and 237–238 (NE) each bind a beta-D-glucoside. E238 serves as the catalytic Proton donor. The cysteines at positions 257 and 260 are disulfide-linked. Residues Y376, E447, W494, 501 to 502 (EW), and F510 each bind a beta-D-glucoside. The active-site Nucleophile is the E447.

It belongs to the glycosyl hydrolase 1 family. Expressed in young and mature leaves, but not in fruit and stem.

It is found in the plastid. Its subcellular location is the chloroplast. The catalysed reaction is 7-[beta-D-apiofuranosyl-(1-&gt;6)-beta-D-glucopyranosyloxy]isoflavonoid + H2O = a 7-hydroxyisoflavonoid + beta-D-apiofuranosyl-(1-&gt;6)-D-glucose.. Functionally, disaccharide-specific acuminosidase, hydrolyzes the beta-glycosidic bond between p-allylphenol and acuminose with retention of anomeric configuration. Has highest activity towards furcatin, and lower activity towards beta-primeverosides and beta-vicianoside. Has very low activity towards beta-gentobiosides. In Viburnum furcatum (Scarlet leaved viburnum), this protein is Furcatin hydrolase.